The sequence spans 463 residues: Glutamate--tRNA ligase (463 aa).

The 'HIGH' region signature appears at 10–20 (PSPTGYLHIGG). The 'KMSKS' region signature appears at 252 to 256 (KLSKR). An ATP-binding site is contributed by Lys-255.

This sequence belongs to the class-I aminoacyl-tRNA synthetase family. Glutamate--tRNA ligase type 1 subfamily. In terms of assembly, monomer.

The protein localises to the cytoplasm. It catalyses the reaction tRNA(Glu) + L-glutamate + ATP = L-glutamyl-tRNA(Glu) + AMP + diphosphate. Catalyzes the attachment of glutamate to tRNA(Glu) in a two-step reaction: glutamate is first activated by ATP to form Glu-AMP and then transferred to the acceptor end of tRNA(Glu). The chain is Glutamate--tRNA ligase from Mycoplasmopsis agalactiae (strain NCTC 10123 / CIP 59.7 / PG2) (Mycoplasma agalactiae).